The sequence spans 233 residues: Antiholin-like protein LrgB (233 aa).

6 consecutive transmembrane segments (helical) span residues 5 to 25 (LGINTPYFGILVSLIPFVIAT), 33 to 53 (GFFLLAPLFVSMVAGIAFLKL), 63 to 83 (IGGDIINFFLEPATICFAIPL), 97 to 117 (IFGGIAVGTIIALLLIYLVAI), 152 to 172 (LTSLAVILNAVVISALGAKIV), and 212 to 232 (IAVVIVGVIVVAVVPILAPIL).

It belongs to the CidB/LrgB family. LrgB subfamily.

It is found in the cell membrane. Inhibits the expression or activity of extracellular murein hydrolases by interacting, possibly with LrgA, with the holin-like proteins CidA and/or CidB. The LrgAB and CidAB proteins may affect the proton motive force of the membrane. May be involved in programmed cell death (PCD), possibly triggering PCD in response to antibiotics and environmental stresses. This chain is Antiholin-like protein LrgB, found in Staphylococcus epidermidis (strain ATCC 12228 / FDA PCI 1200).